The following is a 176-amino-acid chain: Large ribosomal subunit protein uL6 (176 aa).

Residues 151 to 170 (RPPEPYKGKGVRYADEQVRR) are compositionally biased toward basic and acidic residues. Residues 151 to 176 (RPPEPYKGKGVRYADEQVRRKEAKKK) form a disordered region.

Belongs to the universal ribosomal protein uL6 family. Part of the 50S ribosomal subunit.

In terms of biological role, this protein binds to the 23S rRNA, and is important in its secondary structure. It is located near the subunit interface in the base of the L7/L12 stalk, and near the tRNA binding site of the peptidyltransferase center. The polypeptide is Large ribosomal subunit protein uL6 (Shewanella piezotolerans (strain WP3 / JCM 13877)).